The primary structure comprises 66 residues: Large ribosomal subunit protein uL29 (66 aa).

This sequence belongs to the universal ribosomal protein uL29 family.

This is Large ribosomal subunit protein uL29 from Thermoplasma volcanium (strain ATCC 51530 / DSM 4299 / JCM 9571 / NBRC 15438 / GSS1).